Here is a 183-residue protein sequence, read N- to C-terminus: Adenine phosphoribosyltransferase 3 (183 aa).

The protein belongs to the purine/pyrimidine phosphoribosyltransferase family. As to quaternary structure, homodimer.

It is found in the cytoplasm. The enzyme catalyses AMP + diphosphate = 5-phospho-alpha-D-ribose 1-diphosphate + adenine. It participates in purine metabolism; AMP biosynthesis via salvage pathway; AMP from adenine: step 1/1. Functionally, catalyzes a salvage reaction resulting in the formation of AMP, that is energically less costly than de novo synthesis. May contribute to the recycling of adenine into adenylate nucleotides and the inactivation of cytokinins by phosphoribosylation. Possesses low activity toward adenine and cytokinins. This is Adenine phosphoribosyltransferase 3 (APT3) from Arabidopsis thaliana (Mouse-ear cress).